The primary structure comprises 954 residues: Lysine-specific demethylase JMJ14 (954 aa).

A disordered region spans residues 1-46 (MDQLASLAESVAMEEDSEKQSIKGESSLEPDSTPSSPKITARWNPS). Over residues 29–38 (EPDSTPSSPK) the composition is skewed to polar residues. Residues 56–97 (APIFYPTNEDFDDPLGYIEKLRSKAESYGICRIVPPVAWRPP) enclose the JmjN domain. Positions 136 to 143 (RKRRRISK) match the Nuclear localization signal 1 motif. Residues 148–170 (RRKRDSGCDTASSGSSDSEGKFG) are disordered. In terms of domain architecture, JmjC spans 263-429 (QYSQCGWNLN…HGQNAVEGYS (167 aa)). H309, E311, and H397 together coordinate Fe cation. Positions 470–477 (WKRVCSED) match the Nuclear localization signal 2 motif. Zn(2+) is bound by residues C519, C522, C533, C535, C542, H545, C550, and C552. The segment at 519-571 (CFLCFYDLHMSASSCKCSPNRFACLIHAKDLCSCESKDRYILIRHTLDELWAL) adopts a C5HC2 zinc-finger fold. Residues 641-670 (SNKEVQLKQDGDSDVNRHGHESERNHVHGI) form a disordered region. Basic and acidic residues predominate over residues 645 to 670 (VQLKQDGDSDVNRHGHESERNHVHGI). The FYR N-terminal domain maps to 726 to 784 (ATNRLSLSVELLSSGSLVVKKLWCSKQAIYPKGFKSRVKFLSVLDPTNLTNYISEVLDA). The FYR C-terminal domain maps to 786–876 (LLGPLFRVSV…HQLEEYWNQK (91 aa)). Residues 884–905 (EPIKEGEKDDTEKGGASDPSLD) form a disordered region. Positions 885–905 (PIKEGEKDDTEKGGASDPSLD) are enriched in basic and acidic residues.

The protein belongs to the JARID1 histone demethylase family. As to quaternary structure, interacts with NAC050 and NAC051/NAC052. Interacts with THAL in the nucleus. Fe(2+) serves as cofactor. As to expression, expressed in shoot apex, primary root tip, trichomes of young leaves, leaf vascular tissues, anther filaments and styles. Detected in inflorescences, leaves, stems, roots and siliques. Mostly expressed in floral organs, and, at low levels, in other organs.

The protein resides in the nucleus. It is found in the nucleoplasm. It catalyses the reaction N(6),N(6),N(6)-trimethyl-L-lysyl(4)-[histone H3] + 2-oxoglutarate + O2 = N(6),N(6)-dimethyl-L-lysyl(4)-[histone H3] + formaldehyde + succinate + CO2. The catalysed reaction is N(6),N(6)-dimethyl-L-lysyl(4)-[histone H3] + 2-oxoglutarate + O2 = N(6)-methyl-L-lysyl(4)-[histone H3] + formaldehyde + succinate + CO2. The enzyme catalyses N(6)-methyl-L-lysyl(4)-[histone H3] + 2-oxoglutarate + O2 = L-lysyl(4)-[histone H3] + formaldehyde + succinate + CO2. It carries out the reaction N(6),N(6),N(6)-trimethyl-L-lysyl(4)-[histone H3] + 3 2-oxoglutarate + 3 O2 = L-lysyl(4)-[histone H3] + 3 formaldehyde + 3 succinate + 3 CO2. In terms of biological role, transcriptional repressor. Histone demethylase that demethylates 'Lys-4' (H3K4me) of histone H3 with a higher activity for H3K4me3 and H3K4me2 than H3K4me1. No activity on H3K9me3/2, H3K36me3/2 and H3K27me3/2. Function as a nocturne 'eraser' to counteract the diurnal 'writer' methylase activity of ATXR3/SDG2 thus orchestrating the circadian rhythm of histone modifications (e.g. H3K4me3) and modulating the rhythmic expression of diurnal target genes; this mechanism also relies on the circadian clock oscillators CCA1 and LHY. Involved in a negative regulation of root meristem growth upon suboptimal root growth conditions. Represses FT and TSF expression to inhibit the floral transition. Binds around the transcription start site of the FT locus. Involved in the DRM2-mediated maintenance of DNA methylation, but not required for the de novo DNA methylation. Required for demethylating histone H3K4me3 at the target of RNA silencing. Counteracts the DNA methylation of expressed transgenes; specific attenuation of transgene DNA methylation enhances the production of aberrant RNAs (e.g. uncapped and antisense) that readily induce systemic RDR6-dependent post-transcriptional transgene silencing (PTGS) spreading. Together with NAC051/NAC052 and NAC050, regulates gene expression and flowering time, probably by the promotion of RNA-mediated gene silencing. Together with JMJ16 and JMJ17, required for plant growth and development. Promotes local and systemic immunity (especially toward the bacterial pathogen Pseudomonas syringae Pst DC3000 avrRpt2) by regulating positively pathogen-induced H3K4me3 enrichment and expression of defense genes involved in salicylic acid (SA)- and pipecolic acid (Pip)-mediated defense pathways (e.g. PR1, FMO1, ALD1 and SARD4). This chain is Lysine-specific demethylase JMJ14, found in Arabidopsis thaliana (Mouse-ear cress).